We begin with the raw amino-acid sequence, 137 residues long: Small ribosomal subunit protein uS9 (137 aa).

The interval 100–137 (ENRPPLKSEGYLTRDPRAKERKKYGLHKARKAPQYSKR) is disordered. The span at 118 to 137 (KERKKYGLHKARKAPQYSKR) shows a compositional bias: basic residues.

It belongs to the universal ribosomal protein uS9 family.

This Microcystis aeruginosa (strain NIES-843 / IAM M-2473) protein is Small ribosomal subunit protein uS9.